Here is a 399-residue protein sequence, read N- to C-terminus: Glycosyltransferase BC10 (399 aa).

Over 1–17 (MKPPRRWMYGRGGGKGK) the chain is Cytoplasmic. Residues 18-38 (PAGLLLLGVFLCLSVVLLLLL) traverse the membrane as a helical; Signal-anchor for type II membrane protein segment. Over 39–399 (HGSSPSLEGE…LIAANGASTM (361 aa)) the chain is Lumenal. Asn142 and Asn188 each carry an N-linked (GlcNAc...) asparagine glycan.

Belongs to the glycosyltransferase 14 family. As to expression, expressed in roots, culms, leaves and panicles. Expressed in vascular bundles of leaf sheaths and stems where sclerenchyma cells are developing. Expressed in mechanical tissues of young organs, such as young leaf sheaths, stems and tiller buds.

It localises to the membrane. In terms of biological role, glycosyltransferase required for the regulation of cellulose biosynthesis in the cell wall. Required for the biosynthesis of hexoses (glucose, mannose and galactose) in both cellulosic and non-cellulosic (pectins and hemicelluloses) components of cell walls. Required for the formation of arabinogalactan proteins which contribute to the strengthening of cell walls. Possesses low glycosyltransferase activity. The polypeptide is Glycosyltransferase BC10 (Oryza sativa subsp. japonica (Rice)).